The chain runs to 108 residues: uncharacterized protein (108 aa).

The next 3 helical transmembrane spans lie at 36 to 56 (LAIM…DKMI), 58 to 78 (FIFV…KLLF), and 88 to 108 (IVFL…FFNL).

The protein resides in the cell membrane. This is an uncharacterized protein from Alkalihalophilus pseudofirmus (strain ATCC BAA-2126 / JCM 17055 / OF4) (Bacillus pseudofirmus).